Consider the following 275-residue polypeptide: NH(3)-dependent NAD(+) synthetase (275 aa).

Residue 46–53 (GISGGQDS) participates in ATP binding. Mg(2+) is bound at residue D52. R140 serves as a coordination point for deamido-NAD(+). ATP is bound at residue T160. Residue E165 coordinates Mg(2+). 2 residues coordinate deamido-NAD(+): K173 and D180. 2 residues coordinate ATP: K189 and T211. 260-261 (HK) contributes to the deamido-NAD(+) binding site.

Belongs to the NAD synthetase family. As to quaternary structure, homodimer.

The catalysed reaction is deamido-NAD(+) + NH4(+) + ATP = AMP + diphosphate + NAD(+) + H(+). Its pathway is cofactor biosynthesis; NAD(+) biosynthesis; NAD(+) from deamido-NAD(+) (ammonia route): step 1/1. Catalyzes the ATP-dependent amidation of deamido-NAD to form NAD. Uses ammonia as a nitrogen source. The protein is NH(3)-dependent NAD(+) synthetase of Salmonella enteritidis PT4 (strain P125109).